Here is a 150-residue protein sequence, read N- to C-terminus: Cytochrome b5 type B (150 aa).

Residues 1 to 15 (MSGSMATAEASGSDG) constitute a propeptide that is removed on maturation. Residues 1-20 (MSGSMATAEASGSDGKGQEV) are disordered. At Ser-23 the chain carries Phosphoserine. Positions 24 to 100 (VTYYRLEEVA…LKQYYIGDIH (77 aa)) constitute a Cytochrome b5 heme-binding domain. Lys-34 carries the post-translational modification N6-acetyllysine. Ser-37 carries the post-translational modification Phosphoserine. The residue at position 39 (Lys-39) is an N6-methyllysine. Residues His-59 and His-83 each contribute to the heme site. Ser-84 is modified (phosphoserine). Residues 123-140 (WAYWILPIIGAVLLGFLY) traverse the membrane as a helical segment.

The protein belongs to the cytochrome b5 family. As to quaternary structure, component of a complex composed of cytochrome b5, NADH-cytochrome b5 reductase (CYB5R3) and MTARC2.

It localises to the mitochondrion outer membrane. Functionally, cytochrome b5 is a membrane-bound hemoprotein functioning as an electron carrier for several membrane-bound oxygenases. This Homo sapiens (Human) protein is Cytochrome b5 type B (CYB5B).